The following is a 456-amino-acid chain: Bifunctional protein GlmU (456 aa).

A pyrophosphorylase region spans residues Met-1–Arg-229. UDP-N-acetyl-alpha-D-glucosamine is bound by residues Leu-11–Gly-14, Lys-25, Gln-76, Gly-81–Thr-82, Tyr-103–Asp-105, Gly-140, Glu-154, Asn-169, and Asn-227. Asp-105 serves as a coordination point for Mg(2+). Asn-227 contacts Mg(2+). A linker region spans residues Leu-230–Ala-250. An N-acetyltransferase region spans residues Gly-251–Lys-456. 2 residues coordinate UDP-N-acetyl-alpha-D-glucosamine: Arg-333 and Lys-351. Residue His-363 is the Proton acceptor of the active site. UDP-N-acetyl-alpha-D-glucosamine-binding residues include Tyr-366 and Asn-377. Acetyl-CoA-binding positions include Ala-380, Asn-386–Tyr-387, Ser-405, Ala-423, and Arg-440.

In the N-terminal section; belongs to the N-acetylglucosamine-1-phosphate uridyltransferase family. It in the C-terminal section; belongs to the transferase hexapeptide repeat family. In terms of assembly, homotrimer. It depends on Mg(2+) as a cofactor.

Its subcellular location is the cytoplasm. It catalyses the reaction alpha-D-glucosamine 1-phosphate + acetyl-CoA = N-acetyl-alpha-D-glucosamine 1-phosphate + CoA + H(+). It carries out the reaction N-acetyl-alpha-D-glucosamine 1-phosphate + UTP + H(+) = UDP-N-acetyl-alpha-D-glucosamine + diphosphate. It participates in nucleotide-sugar biosynthesis; UDP-N-acetyl-alpha-D-glucosamine biosynthesis; N-acetyl-alpha-D-glucosamine 1-phosphate from alpha-D-glucosamine 6-phosphate (route II): step 2/2. The protein operates within nucleotide-sugar biosynthesis; UDP-N-acetyl-alpha-D-glucosamine biosynthesis; UDP-N-acetyl-alpha-D-glucosamine from N-acetyl-alpha-D-glucosamine 1-phosphate: step 1/1. Its pathway is bacterial outer membrane biogenesis; LPS lipid A biosynthesis. Functionally, catalyzes the last two sequential reactions in the de novo biosynthetic pathway for UDP-N-acetylglucosamine (UDP-GlcNAc). The C-terminal domain catalyzes the transfer of acetyl group from acetyl coenzyme A to glucosamine-1-phosphate (GlcN-1-P) to produce N-acetylglucosamine-1-phosphate (GlcNAc-1-P), which is converted into UDP-GlcNAc by the transfer of uridine 5-monophosphate (from uridine 5-triphosphate), a reaction catalyzed by the N-terminal domain. The chain is Bifunctional protein GlmU from Edwardsiella ictaluri (strain 93-146).